A 404-amino-acid polypeptide reads, in one-letter code: E3 ubiquitin-protein ligase RNF128 (404 aa).

The signal sequence occupies residues 1-31 (MGALKMRCQCFPLPYLSLLALLLLNLSLTRA). One can recognise a PA domain in the interval 62–166 (DSPIERAAGL…LKGNEIVDLI (105 aa)). The helical transmembrane segment at 191–211 (IFFVSVSFFIVTAATVGYFIF) threads the bilayer. The RING-type; atypical zinc-finger motif lies at 260–301 (CAVCIEPYKPSDVVRILTCNHFFHKNCIDPWLLEHRTCPMCK). The interval 336–356 (ITEEENHSETASSGYASVRGG) is disordered.

Post-translationally, auto-ubiquitinated. As to expression, expressed in the cement gland, cranial placodes, and the pronephros.

The protein resides in the endomembrane system. Its subcellular location is the cytoplasm. The protein localises to the perinuclear region. It carries out the reaction S-ubiquitinyl-[E2 ubiquitin-conjugating enzyme]-L-cysteine + [acceptor protein]-L-lysine = [E2 ubiquitin-conjugating enzyme]-L-cysteine + N(6)-ubiquitinyl-[acceptor protein]-L-lysine.. Its pathway is protein modification; protein ubiquitination. E3 ubiquitin-protein ligase that catalyzes polyubiquitin chains. Converts epidermis into cement gland and neural tissue in whole embryos. The polypeptide is E3 ubiquitin-protein ligase RNF128 (rnf128) (Xenopus laevis (African clawed frog)).